Consider the following 316-residue polypeptide: Malate dehydrogenase (316 aa).

NAD(+) contacts are provided by residues 12–17 and Asp-36; that span reads GAGNIG. Substrate-binding residues include Arg-85 and Arg-91. Residues Asn-98 and 121–123 contribute to the NAD(+) site; that span reads VTN. The substrate site is built by Asn-123 and Arg-154. His-178 functions as the Proton acceptor in the catalytic mechanism.

It belongs to the LDH/MDH superfamily. MDH type 3 family.

It catalyses the reaction (S)-malate + NAD(+) = oxaloacetate + NADH + H(+). Its function is as follows. Catalyzes the reversible oxidation of malate to oxaloacetate. This is Malate dehydrogenase from Wolbachia sp. subsp. Brugia malayi (strain TRS).